A 1013-amino-acid chain; its full sequence is Sodium/potassium-transporting ATPase subunit alpha-3 (1013 aa).

The span at 1–10 shows a compositional bias: basic and acidic residues; it reads MGDKKDDKSS. A disordered region spans residues 1–24; it reads MGDKKDDKSSPKKSKAKERRDLDD. The Cytoplasmic portion of the chain corresponds to 1–77; that stretch reads MGDKKDDKSS…NALTPPPTTP (77 aa). A phosphoserine mark is found at S37 and S56. The interval 72-74 is interaction with phosphoinositide-3 kinase; the sequence is PPP. Residues 78–98 traverse the membrane as a helical segment; that stretch reads EWVKFCRQLFGGFSILLWIGA. The Extracellular portion of the chain corresponds to 99-121; sequence ILCFLAYGIQAGTEDDPSGDNLY. Residues 122–142 form a helical membrane-spanning segment; that stretch reads LGIVLAAVVIITGCFSYYQEA. Topologically, residues 143–278 are cytoplasmic; the sequence is KSSKIMESFK…VGKTPIAIEI (136 aa). Phosphoserine occurs at positions 218 and 265. The helical transmembrane segment at 279-298 threads the bilayer; the sequence is EHFIQLITGVAVFLGVSFFI. The Extracellular portion of the chain corresponds to 299–310; the sequence is LSLILGYTWLEA. The helical transmembrane segment at 311–328 threads the bilayer; the sequence is VIFLIGIIVANVPEGLLA. The Cytoplasmic segment spans residues 329 to 762; the sequence is TVTVCLTLTA…EEGRLIFDNL (434 aa). D366 functions as the 4-aspartylphosphate intermediate in the catalytic mechanism. S442 is modified (phosphoserine). Residue Y548 is modified to Phosphotyrosine. Mg(2+)-binding residues include D707 and D711. The chain crosses the membrane as a helical span at residues 763 to 782; the sequence is KKSIAYTLTSNIPEITPFLL. Topologically, residues 783 to 792 are extracellular; the sequence is FIMANIPLPL. Residues 793–813 form a helical membrane-spanning segment; the sequence is GTITILCIDLGTDMVPAISLA. The Cytoplasmic portion of the chain corresponds to 814-833; sequence YEAAESDIMKRQPRNPRTDK. Residues 834–856 traverse the membrane as a helical segment; the sequence is LVNERLISMAYGQIGMIQALGGF. Topologically, residues 857 to 908 are extracellular; that stretch reads FSYFVILAENGFLPGNLVGIRLNWDDRTVNDLEDSYGQQWTYEQRKVVEFTC. Residues 909–928 traverse the membrane as a helical segment; that stretch reads HTAFFVSIVVVQWADLIICK. Residues 929-941 are Cytoplasmic-facing; it reads TRRNSVFQQGMKN. S933 is subject to Phosphoserine; by PKA. Residues 942–960 traverse the membrane as a helical segment; that stretch reads KILIFGLFEETALAAFLSY. The Extracellular portion of the chain corresponds to 961–975; that stretch reads CPGMDVALRMYPLKP. A helical membrane pass occupies residues 976–996; it reads SWWFCAFPYSFLIFVYDEIRK. Over 997–1013 the chain is Cytoplasmic; it reads LILRRNPGGWVEKETYY.

It belongs to the cation transport ATPase (P-type) (TC 3.A.3) family. Type IIC subfamily. The sodium/potassium-transporting ATPase is composed of a catalytic alpha subunit, an auxiliary non-catalytic beta subunit and an additional regulatory subunit. Interacts with regulatory subunit FXYD1.

The protein localises to the cell membrane. The enzyme catalyses K(+)(out) + Na(+)(in) + ATP + H2O = K(+)(in) + Na(+)(out) + ADP + phosphate + H(+). Functionally, this is the catalytic component of the active enzyme, which catalyzes the hydrolysis of ATP coupled with the exchange of sodium and potassium ions across the plasma membrane. This action creates the electrochemical gradient of sodium and potassium ions, providing the energy for active transport of various nutrients. This chain is Sodium/potassium-transporting ATPase subunit alpha-3 (Atp1a3), found in Mus musculus (Mouse).